The primary structure comprises 332 residues: Glycerol-3-phosphate dehydrogenase [NAD(P)+] 2 (332 aa).

S17, W18, R37, and K112 together coordinate NADPH. Positions 112 and 140 each coordinate sn-glycerol 3-phosphate. A144 serves as a coordination point for NADPH. Positions 195, 243, 253, 254, and 255 each coordinate sn-glycerol 3-phosphate. The active-site Proton acceptor is the K195. Residue R254 coordinates NADPH. NADPH is bound by residues V278 and E280.

This sequence belongs to the NAD-dependent glycerol-3-phosphate dehydrogenase family.

The protein resides in the cytoplasm. The catalysed reaction is sn-glycerol 3-phosphate + NAD(+) = dihydroxyacetone phosphate + NADH + H(+). The enzyme catalyses sn-glycerol 3-phosphate + NADP(+) = dihydroxyacetone phosphate + NADPH + H(+). Its pathway is membrane lipid metabolism; glycerophospholipid metabolism. Its function is as follows. Catalyzes the reduction of the glycolytic intermediate dihydroxyacetone phosphate (DHAP) to sn-glycerol 3-phosphate (G3P), the key precursor for phospholipid synthesis. The protein is Glycerol-3-phosphate dehydrogenase [NAD(P)+] 2 of Mycolicibacterium paratuberculosis (strain ATCC BAA-968 / K-10) (Mycobacterium paratuberculosis).